Here is a 508-residue protein sequence, read N- to C-terminus: Photosystem II CP47 reaction center protein (508 aa).

The next 6 membrane-spanning stretches (helical) occupy residues 21-36 (SVHI…WAGS), 101-115 (IVFS…IWHW), 140-156 (GIHL…FGAF), 203-218 (IAAG…FHLS), 237-252 (VLSS…AFVV), and 457-472 (SFAL…HGAR).

The protein belongs to the PsbB/PsbC family. PsbB subfamily. As to quaternary structure, PSII is composed of 1 copy each of membrane proteins PsbA, PsbB, PsbC, PsbD, PsbE, PsbF, PsbH, PsbI, PsbJ, PsbK, PsbL, PsbM, PsbT, PsbX, PsbY, PsbZ, Psb30/Ycf12, at least 3 peripheral proteins of the oxygen-evolving complex and a large number of cofactors. It forms dimeric complexes. Binds multiple chlorophylls. PSII binds additional chlorophylls, carotenoids and specific lipids. serves as cofactor.

It is found in the plastid. It localises to the chloroplast thylakoid membrane. Functionally, one of the components of the core complex of photosystem II (PSII). It binds chlorophyll and helps catalyze the primary light-induced photochemical processes of PSII. PSII is a light-driven water:plastoquinone oxidoreductase, using light energy to abstract electrons from H(2)O, generating O(2) and a proton gradient subsequently used for ATP formation. The sequence is that of Photosystem II CP47 reaction center protein from Phaseolus vulgaris (Kidney bean).